Reading from the N-terminus, the 102-residue chain is MKFSKLSLTLALILTQAIFVLCGKINEDFMENGLESHALHDEIRKPIDTEKADAERGVVDCVLNTLGCSSDKDCCGMTPSCTLGICAPSVGGLVGGLLGRAL.

Residues 1–23 form the signal peptide; the sequence is MKFSKLSLTLALILTQAIFVLCG. Positions 24 to 56 are excised as a propeptide; that stretch reads KINEDFMENGLESHALHDEIRKPIDTEKADAER. 3 disulfides stabilise this stretch: Cys-61–Cys-75, Cys-68–Cys-81, and Cys-74–Cys-86. A Leucine amide modification is found at Leu-98. A propeptide spanning residues 100 to 102 is cleaved from the precursor; sequence RAL.

Belongs to the neurotoxin 15 family. 02 (omega-actx) subfamily. As to expression, expressed by the venom gland.

The protein resides in the secreted. In terms of biological role, potent inhibitor of insect, but not mammalian, voltage-gated calcium channels (Cav). The protein is Omega-hexatoxin-Hi2b of Hadronyche infensa (Fraser island funnel-web spider).